The primary structure comprises 576 residues: Enolase 4 (576 aa).

Residues 187–232 form a disordered region; that stretch reads ELRNEAMSEAPPQATPTSAPAKDKKGNDKGKKGNITENPLPPAEPP. Residues 196–206 are compositionally biased toward low complexity; sequence APPQATPTSAP. Positions 207–217 are enriched in basic and acidic residues; the sequence is AKDKKGNDKGK. Glu302 and Lys524 together coordinate substrate.

Belongs to the enolase family.

It carries out the reaction (2R)-2-phosphoglycerate = phosphoenolpyruvate + H2O. The protein operates within carbohydrate degradation; glycolysis; pyruvate from D-glyceraldehyde 3-phosphate: step 4/5. In Danio rerio (Zebrafish), this protein is Enolase 4 (eno4).